Reading from the N-terminus, the 104-residue chain is NADH-quinone oxidoreductase subunit K (104 aa).

3 consecutive transmembrane segments (helical) span residues 7–27 (PDMA…GVLV), 31–51 (LLFM…AFVA), and 63–83 (VMFL…LAIL).

This sequence belongs to the complex I subunit 4L family. NDH-1 is composed of 14 different subunits. Subunits NuoA, H, J, K, L, M, N constitute the membrane sector of the complex.

It is found in the cell inner membrane. The catalysed reaction is a quinone + NADH + 5 H(+)(in) = a quinol + NAD(+) + 4 H(+)(out). In terms of biological role, NDH-1 shuttles electrons from NADH, via FMN and iron-sulfur (Fe-S) centers, to quinones in the respiratory chain. The immediate electron acceptor for the enzyme in this species is believed to be ubiquinone. Couples the redox reaction to proton translocation (for every two electrons transferred, four hydrogen ions are translocated across the cytoplasmic membrane), and thus conserves the redox energy in a proton gradient. This is NADH-quinone oxidoreductase subunit K from Gluconacetobacter diazotrophicus (strain ATCC 49037 / DSM 5601 / CCUG 37298 / CIP 103539 / LMG 7603 / PAl5).